The sequence spans 330 residues: Ribosomal RNA small subunit methyltransferase C (330 aa).

Belongs to the methyltransferase superfamily. RsmC family. Monomer.

The protein localises to the cytoplasm. The enzyme catalyses guanosine(1207) in 16S rRNA + S-adenosyl-L-methionine = N(2)-methylguanosine(1207) in 16S rRNA + S-adenosyl-L-homocysteine + H(+). In terms of biological role, specifically methylates the guanine in position 1207 of 16S rRNA in the 30S particle. This is Ribosomal RNA small subunit methyltransferase C from Haemophilus influenzae (strain PittGG).